Consider the following 372-residue polypeptide: Dual-specificity RNA methyltransferase RlmN (372 aa).

Glu93 serves as the catalytic Proton acceptor. The Radical SAM core domain occupies 99-338 (EKDRATLCIS…VTVRKTRGDD (240 aa)). Cys106 and Cys343 are oxidised to a cystine. [4Fe-4S] cluster-binding residues include Cys113, Cys117, and Cys120. S-adenosyl-L-methionine is bound by residues 167 to 168 (GE), Ser199, 221 to 223 (SLH), and Asn300. Cys343 (S-methylcysteine intermediate) is an active-site residue.

The protein belongs to the radical SAM superfamily. RlmN family. [4Fe-4S] cluster is required as a cofactor.

It localises to the cytoplasm. It catalyses the reaction adenosine(2503) in 23S rRNA + 2 reduced [2Fe-2S]-[ferredoxin] + 2 S-adenosyl-L-methionine = 2-methyladenosine(2503) in 23S rRNA + 5'-deoxyadenosine + L-methionine + 2 oxidized [2Fe-2S]-[ferredoxin] + S-adenosyl-L-homocysteine. The enzyme catalyses adenosine(37) in tRNA + 2 reduced [2Fe-2S]-[ferredoxin] + 2 S-adenosyl-L-methionine = 2-methyladenosine(37) in tRNA + 5'-deoxyadenosine + L-methionine + 2 oxidized [2Fe-2S]-[ferredoxin] + S-adenosyl-L-homocysteine. In terms of biological role, specifically methylates position 2 of adenine 2503 in 23S rRNA and position 2 of adenine 37 in tRNAs. m2A2503 modification seems to play a crucial role in the proofreading step occurring at the peptidyl transferase center and thus would serve to optimize ribosomal fidelity. The protein is Dual-specificity RNA methyltransferase RlmN of Psychromonas ingrahamii (strain DSM 17664 / CCUG 51855 / 37).